A 295-amino-acid chain; its full sequence is Malonyl-[acyl-carrier protein] O-methyltransferase (295 aa).

This sequence belongs to the methyltransferase superfamily.

It catalyses the reaction malonyl-[ACP] + S-adenosyl-L-methionine = malonyl-[ACP] methyl ester + S-adenosyl-L-homocysteine. It functions in the pathway cofactor biosynthesis; biotin biosynthesis. Functionally, converts the free carboxyl group of a malonyl-thioester to its methyl ester by transfer of a methyl group from S-adenosyl-L-methionine (SAM). It allows to synthesize pimeloyl-ACP via the fatty acid synthetic pathway. This Xylella fastidiosa (strain M23) protein is Malonyl-[acyl-carrier protein] O-methyltransferase.